The sequence spans 123 residues: Ribosome-binding factor A (123 aa).

Belongs to the RbfA family. As to quaternary structure, monomer. Binds 30S ribosomal subunits, but not 50S ribosomal subunits or 70S ribosomes.

It is found in the cytoplasm. Functionally, one of several proteins that assist in the late maturation steps of the functional core of the 30S ribosomal subunit. Associates with free 30S ribosomal subunits (but not with 30S subunits that are part of 70S ribosomes or polysomes). Required for efficient processing of 16S rRNA. May interact with the 5'-terminal helix region of 16S rRNA. The protein is Ribosome-binding factor A of Chlorobium chlorochromatii (strain CaD3).